The primary structure comprises 1120 residues: Cluster 41 polyketide synthase (1120 aa).

Residues 7–430 (PHDVAVVGMG…GTVSHAIIEK (424 aa)) form the Ketosynthase family 3 (KS3) domain. Catalysis depends on for beta-ketoacyl synthase activity residues Cys178, His313, and His353. The malonyl-CoA:ACP transacylase (MAT) domain stretch occupies residues 539–796 (VWVFSGHGAQ…TSAISAAAED (258 aa)). Ser625 acts as the For acyl/malonyl transferase activity in catalysis. Positions 804–943 (IKKILSMESR…IAMQWTSWRE (140 aa)) are ketoreductase (KR) domain. The region spanning 1042-1116 (DSLSRQVREC…HIVKWLMEKT (75 aa)) is the Carrier domain. Ser1076 is subject to O-(pantetheine 4'-phosphoryl)serine.

Polyketide synthase; part of the gene cluster 41 that mediates the biosynthesis of an extracellular and diffusible metabolite that is able to stimulate colony sclerotial production. This chain is Cluster 41 polyketide synthase, found in Aspergillus flavus (strain ATCC 200026 / FGSC A1120 / IAM 13836 / NRRL 3357 / JCM 12722 / SRRC 167).